The primary structure comprises 206 residues: Small ribosomal subunit protein uS4 (206 aa).

An S4 RNA-binding domain is found at 96–158 (SRLDNVVYRM…AKGQLRIKGA (63 aa)).

Belongs to the universal ribosomal protein uS4 family. Part of the 30S ribosomal subunit. Contacts protein S5. The interaction surface between S4 and S5 is involved in control of translational fidelity.

In terms of biological role, one of the primary rRNA binding proteins, it binds directly to 16S rRNA where it nucleates assembly of the body of the 30S subunit. Its function is as follows. With S5 and S12 plays an important role in translational accuracy. The sequence is that of Small ribosomal subunit protein uS4 from Coxiella burnetii (strain CbuK_Q154) (Coxiella burnetii (strain Q154)).